The following is a 434-amino-acid chain: Progestin and adipoQ receptor-like protein 1 (434 aa).

The Cytoplasmic portion of the chain corresponds to M1 to T201. Disordered stretches follow at residues L74–H103 and E118–V137. The chain crosses the membrane as a helical span at residues G202–L222. Topologically, residues T223–K234 are extracellular. A helical membrane pass occupies residues V235–H255. The Cytoplasmic segment spans residues T256 to Y273. Residues M274–C294 form a helical membrane-spanning segment. Topologically, residues R295–K299 are extracellular. A helical transmembrane segment spans residues I300 to D320. The Cytoplasmic segment spans residues K321–R331. Residues A332–T352 form a helical membrane-spanning segment. Residues D353 to N362 lie on the Extracellular side of the membrane. Residues S363 to T383 traverse the membrane as a helical segment. Residues R384–L403 are Cytoplasmic-facing. A helical membrane pass occupies residues F404 to F424. Topologically, residues A425 to R434 are extracellular.

Belongs to the ADIPOR family.

Its subcellular location is the membrane. Functionally, probable receptor, which may be involved in metabolic pathways that regulate lipid metabolism such as fatty acid oxidation. This Caenorhabditis elegans protein is Progestin and adipoQ receptor-like protein 1 (paqr-1).